The primary structure comprises 360 residues: Phospho-N-acetylmuramoyl-pentapeptide-transferase (360 aa).

The next 10 helical transmembrane spans lie at 21–41, 73–93, 97–117, 134–154, 168–188, 199–219, 239–259, 263–283, 288–308, and 338–358; these read YLTLRAILSTLTALLIAILIG, TMGGLLILAAIVVSGLLWADL, YVLVTLTVVVAYGIIGFVDDY, YFWQSVVALGVAFYLYSSATM, VFPQLGIFFIIITYFAIVGTS, GLAIVPTILVAGAFAIFAYVT, LVIVCTAMVGAGLGFLWFNTY, VFMGDVGSLALGGTLGVLAVL, LVLIIMGGVFVMETLSVILQV, and VIVRFWIISIILVLVGLATLK.

This sequence belongs to the glycosyltransferase 4 family. MraY subfamily. The cofactor is Mg(2+).

The protein localises to the cell inner membrane. The enzyme catalyses UDP-N-acetyl-alpha-D-muramoyl-L-alanyl-gamma-D-glutamyl-meso-2,6-diaminopimeloyl-D-alanyl-D-alanine + di-trans,octa-cis-undecaprenyl phosphate = di-trans,octa-cis-undecaprenyl diphospho-N-acetyl-alpha-D-muramoyl-L-alanyl-D-glutamyl-meso-2,6-diaminopimeloyl-D-alanyl-D-alanine + UMP. It participates in cell wall biogenesis; peptidoglycan biosynthesis. Functionally, catalyzes the initial step of the lipid cycle reactions in the biosynthesis of the cell wall peptidoglycan: transfers peptidoglycan precursor phospho-MurNAc-pentapeptide from UDP-MurNAc-pentapeptide onto the lipid carrier undecaprenyl phosphate, yielding undecaprenyl-pyrophosphoryl-MurNAc-pentapeptide, known as lipid I. The polypeptide is Phospho-N-acetylmuramoyl-pentapeptide-transferase (Alteromonas mediterranea (strain DSM 17117 / CIP 110805 / LMG 28347 / Deep ecotype)).